The sequence spans 66 residues: Photosystem II reaction center protein H (66 aa).

A helical membrane pass occupies residues 27 to 47; that stretch reads GAVPIMTVIGLLLLVFLVILL.

Belongs to the PsbH family. PSII is composed of 1 copy each of membrane proteins PsbA, PsbB, PsbC, PsbD, PsbE, PsbF, PsbH, PsbI, PsbJ, PsbK, PsbL, PsbM, PsbT, PsbX, PsbY, Psb30/Ycf12, peripheral proteins PsbO, CyanoQ (PsbQ), PsbU, PsbV and a large number of cofactors. It forms dimeric complexes.

Its subcellular location is the cellular thylakoid membrane. One of the components of the core complex of photosystem II (PSII), required for its stability and/or assembly. PSII is a light-driven water:plastoquinone oxidoreductase that uses light energy to abstract electrons from H(2)O, generating O(2) and a proton gradient subsequently used for ATP formation. It consists of a core antenna complex that captures photons, and an electron transfer chain that converts photonic excitation into a charge separation. In Prochlorococcus marinus (strain MIT 9515), this protein is Photosystem II reaction center protein H.